Consider the following 336-residue polypeptide: MGEPQRPLAVSLGDPAGIGPEIIVHAWRMRDSANLAPFAVAGGANVLRSATEALGVPCPIQEIDDIAEANSAFLEALPVIKGLDGAYLPGAPDPIGAKLALKSLEMATRLATAGHASGVVTAPIAKGLLEQVGFTHPGQTEFLAAACGLPEDASVMMLAGPSLRAVPLTVHCPLAEVPGLLSIGLIVERGRIVASALQRDFGIERPRLAVTGLNPHAGEDGKFGNEEQDVIAPAIAELLADGITATGPHPADALFSPHSRAGFDAALCMYHDQALIPVKALDFDQGVNVTLGLPIVRTSPDHGTAFDIAGRGTAHPGAMVFALLMAGECAARRADA.

T140 serves as a coordination point for substrate. Positions 171, 216, and 271 each coordinate a divalent metal cation. Residues K279, N288, and R297 each coordinate substrate.

Belongs to the PdxA family. As to quaternary structure, homodimer. The cofactor is Zn(2+). It depends on Mg(2+) as a cofactor. Co(2+) serves as cofactor.

It localises to the cytoplasm. The enzyme catalyses 4-(phosphooxy)-L-threonine + NAD(+) = 3-amino-2-oxopropyl phosphate + CO2 + NADH. It functions in the pathway cofactor biosynthesis; pyridoxine 5'-phosphate biosynthesis; pyridoxine 5'-phosphate from D-erythrose 4-phosphate: step 4/5. Its function is as follows. Catalyzes the NAD(P)-dependent oxidation of 4-(phosphooxy)-L-threonine (HTP) into 2-amino-3-oxo-4-(phosphooxy)butyric acid which spontaneously decarboxylates to form 3-amino-2-oxopropyl phosphate (AHAP). The chain is 4-hydroxythreonine-4-phosphate dehydrogenase from Erythrobacter litoralis (strain HTCC2594).